The chain runs to 633 residues: NADPH-dependent diflavin oxidoreductase 1 (633 aa).

The Flavodoxin-like domain maps to 5-149 (CTIIYATESG…EVEKWSQELI (145 aa)). Residues 11-16 (TESGTS), 58-61 (STTG), and D131 each bind FMN. Residues 196-442 (TQFYKSKLKV…FIKESGARLP (247 aa)) form the FAD-binding FR-type domain. FAD-binding positions include 377–380 (RPFS) and 412–415 (GLCS). NADP(+) contacts are provided by residues T456, 520–521 (SR), 528–532 (KVYVQ), and D565. A disordered region spans residues 580–610 (KNNNNNNNNNNNNNNNNNNNNNNNNNDDENN). Low complexity predominate over residues 581–604 (NNNNNNNNNNNNNNNNNNNNNNNN). Position 633 (W633) interacts with FAD.

This sequence belongs to the NADPH-dependent diflavin oxidoreductase NDOR1 family. The protein in the N-terminal section; belongs to the flavodoxin family. In the C-terminal section; belongs to the flavoprotein pyridine nucleotide cytochrome reductase family. The cofactor is FAD. Requires FMN as cofactor.

It localises to the cytoplasm. It catalyses the reaction 2 oxidized [2Fe-2S]-[protein] + NADPH = 2 reduced [2Fe-2S]-[protein] + NADP(+) + H(+). NADPH-dependent reductase which is a central component of the cytosolic iron-sulfur (Fe-S) protein assembly (CIA) machinery. Transfers electrons from NADPH via its FAD and FMN prosthetic groups to the [2Fe-2S] cluster of the anamorsin/DRE2 homolog, another key component of the CIA machinery. In turn, this reduced cluster provides electrons for assembly of cytosolic iron-sulfur cluster proteins. The polypeptide is NADPH-dependent diflavin oxidoreductase 1 (redC) (Dictyostelium discoideum (Social amoeba)).